An 82-amino-acid chain; its full sequence is Cytochrome c-551 (82 aa).

Residues cysteine 12, cysteine 15, histidine 16, and methionine 61 each coordinate heme c.

In terms of processing, binds 1 heme c group covalently per subunit.

This is a prokaryotic monoheme cytochrome, unreactive with mitochondrial cytochrome C oxidase or reductase. It functions in nitrite and nitrate respiration in Pseudomonas, but it is also found in other bacteria. The sequence is that of Cytochrome c-551 from Pseudomonas denitrificans.